A 186-amino-acid chain; its full sequence is MHMKLILNLLVLLAPAAVFAAGGGHGDGHIPTSTIMFQAINLTILFAAIIYFTKDAIVSFFAGRKAAYLEAAQKSAFAREQAEKEFVDIKNKLANLDQTREENLRKAQTHAEDLKKQILEEANDVTKRIKNDAELTARLEVQRAQKELRTQLLQDSVEAARIVLTKDLGSSDQQKLQKDFINNVGV.

A helical membrane pass occupies residues 5-25; that stretch reads LILNLLVLLAPAAVFAAGGGH.

This sequence belongs to the ATPase B chain family. As to quaternary structure, F-type ATPases have 2 components, F(1) - the catalytic core - and F(0) - the membrane proton channel. F(1) has five subunits: alpha(3), beta(3), gamma(1), delta(1), epsilon(1). F(0) has three main subunits: a(1), b(2) and c(10-14). The alpha and beta chains form an alternating ring which encloses part of the gamma chain. F(1) is attached to F(0) by a central stalk formed by the gamma and epsilon chains, while a peripheral stalk is formed by the delta and b chains.

The protein localises to the cell inner membrane. Its function is as follows. F(1)F(0) ATP synthase produces ATP from ADP in the presence of a proton or sodium gradient. F-type ATPases consist of two structural domains, F(1) containing the extramembraneous catalytic core and F(0) containing the membrane proton channel, linked together by a central stalk and a peripheral stalk. During catalysis, ATP synthesis in the catalytic domain of F(1) is coupled via a rotary mechanism of the central stalk subunits to proton translocation. In terms of biological role, component of the F(0) channel, it forms part of the peripheral stalk, linking F(1) to F(0). In Bdellovibrio bacteriovorus (strain ATCC 15356 / DSM 50701 / NCIMB 9529 / HD100), this protein is ATP synthase subunit b.